Consider the following 336-residue polypeptide: MKDRYILAFETSCDETSVAVLKNDDELLSNVIASQIESHKRFGGVVPEVASRHHVEVITACIEEALAEAGITEEDVTAVAVTYGPGLVGALLVGLSAAKAFAWAHGLPLIPVNHMAGHLMAAQSVEPLEFPLLALLVSGGHTELVYVSEAGDYKIVGETRDDAVGEAYDKVGRVMGLTYPAGREIDELAHQGQDIYDFPRAMIKEDNLEFSFSGLKSAFINLHHNAEQKGESLSTEDLCASFQAAVMDILMAKTKKALEKYPVKTLVVAGGVAANKGLRERLATEITDVNVIIPPLRLCGDNAGMIAYASVSEWNKENFANLDLNAKPSLAFDTME.

Residues histidine 114 and histidine 118 each contribute to the Fe cation site. Residues 136 to 140 (LVSGG), aspartate 169, glycine 182, aspartate 186, and asparagine 275 each bind substrate. Aspartate 301 provides a ligand contact to Fe cation.

It belongs to the KAE1 / TsaD family. It depends on Fe(2+) as a cofactor.

It localises to the cytoplasm. It catalyses the reaction L-threonylcarbamoyladenylate + adenosine(37) in tRNA = N(6)-L-threonylcarbamoyladenosine(37) in tRNA + AMP + H(+). In terms of biological role, required for the formation of a threonylcarbamoyl group on adenosine at position 37 (t(6)A37) in tRNAs that read codons beginning with adenine. Is involved in the transfer of the threonylcarbamoyl moiety of threonylcarbamoyl-AMP (TC-AMP) to the N6 group of A37, together with TsaE and TsaB. TsaD likely plays a direct catalytic role in this reaction. The chain is tRNA N6-adenosine threonylcarbamoyltransferase from Streptococcus pneumoniae serotype 2 (strain D39 / NCTC 7466).